We begin with the raw amino-acid sequence, 138 residues long: Small ribosomal subunit protein uS11 (138 aa).

Residues 1-12 (MPPKKAAASSAK) are compositionally biased toward low complexity. A disordered region spans residues 1-28 (MPPKKAAASSAKKGQKTRRREKKNVPHG). Over residues 13-22 (KGQKTRRREK) the composition is skewed to basic residues.

The protein belongs to the universal ribosomal protein uS11 family. In terms of assembly, part of the 30S ribosomal subunit. Interacts with proteins S7 and S18. Binds to IF-3.

In terms of biological role, located on the platform of the 30S subunit, it bridges several disparate RNA helices of the 16S rRNA. Forms part of the Shine-Dalgarno cleft in the 70S ribosome. This Mycobacterium sp. (strain JLS) protein is Small ribosomal subunit protein uS11.